We begin with the raw amino-acid sequence, 354 residues long: MSLSPKHTTPFSVSDILSPIEETYKKFGGVMDGAPPGLGAPLGAAAYRAPPSGPSSQAAAVAAGMQPPHAMAGHNAAAAAAAAAAAAAAAATYHMPPGVSQFPHSAMGSYCNGGLGNMGELPAYTDGMRGGAAAAATGWYGANTDPRYSSISRFMGPSAGVNVAGMGSLTGIADAAKSLAPLHAAAPRRKRRVLFSQAQVYELERRFKQQKYLSAPEREHLASMIHLTPTQVKIWFQNHRYKMKRQAKDKAAQQLQQEGGLGPPPPPPPPSPRRVAVPVLVKDGKPCQNGAGTPTPGQGGQQPQAPTPAPELEELSPSPPALHGPGGGLAALDAATGDYGGGVLGANLLYGRTW.

The homeobox DNA-binding region spans 188-247 (RRKRRVLFSQAQVYELERRFKQQKYLSAPEREHLASMIHLTPTQVKIWFQNHRYKMKRQA). The interval 245 to 329 (RQAKDKAAQQ…PALHGPGGGL (85 aa)) is disordered. Pro residues predominate over residues 262 to 272 (GPPPPPPPPSP). The span at 290 to 304 (GAGTPTPGQGGQQPQ) shows a compositional bias: low complexity.

The protein belongs to the NK-2 homeobox family. In terms of tissue distribution, in the embryo it is detected in the posterior hypothalamus and later in the head. In the adult it is detected only in testis.

It is found in the nucleus. In terms of biological role, probable transcription factor. This is Homeobox protein Nkx-2.4 (Nkx2-4) from Mus musculus (Mouse).